The primary structure comprises 391 residues: MLKSGLMDTDDQKVGVRVANIDMSERTDNVHLIEIRRIISLVGAAYFFFMTAWVVPVACVITVSLLFPLMLFSTPLFNYLEHKLCAMVNAHWNAVSVFVGATVTEYGTNLAGYAEEKCLLLANHLGLLDHFVLMQSLNGKGSIRSRWMWVIYNIWKYTPLGVMWTSHGNFFVNGGVSKRDSVLSSFRDHLKNSFYKYDYGWVIMYPEGSRLYLVKNSGRTFAEKNGLKPLDNCVYPRTGAAHAVLDVLGPTDDSLSMSKCGKGEPIKYIIDATIGYRKGAVPDICDVMMGDWESVEASQFAVHYDVIPVKPEWSDENLLKEFLYERYIIKDKLLAEFYKTGHFPGDKTKVIPNNYEMMFAQVFWGCLYYAHYVYWLRPLIVHSWTSFLSIF.

2 consecutive transmembrane segments (helical) span residues 47–67 (FFFMTAWVVPVACVITVSLLF) and 84–104 (LCAMVNAHWNAVSVFVGATVT). Positions 124–129 (HLGLLD) match the HXXXXD motif motif.

This sequence belongs to the 1-acyl-sn-glycerol-3-phosphate acyltransferase family.

Its subcellular location is the membrane. It carries out the reaction a 1-acyl-sn-glycero-3-phosphate + an acyl-CoA = a 1,2-diacyl-sn-glycero-3-phosphate + CoA. It participates in phospholipid metabolism; CDP-diacylglycerol biosynthesis; CDP-diacylglycerol from sn-glycerol 3-phosphate: step 2/3. In terms of biological role, converts lysophosphatidic acid (LPA) into phosphatidic acid by incorporating an acyl moiety at the sn-2 position of the glycerol backbone. In Caenorhabditis elegans, this protein is Putative 1-acyl-sn-glycerol-3-phosphate acyltransferase acl-12 (acl-12).